Here is a 451-residue protein sequence, read N- to C-terminus: MSQLYASLFYQRDVTEIFSDRALVSYMVEAEVALAQAQAQVGVIPQSAATVIERAAKTAIDKIDFDALATATGLAGNIAIPFVKQLTAIVKDADEDAARYVHWGATSQDILDTACILQCRDALAIVQNQVQQCYETALSQAQTYRHQVMMGRTWLQQALPITLGHKLARWASAFKRDLDRINAIKARVLVAQLGGAVGSLASLQDQGSIVVEAYAKQLKLGQTACTWHGERDRIVEIASVLGIITGNVGKMARDWSLMMQTEIAEVFEPTAKGRGGSSTMPHKRNPVAAASVLAAANRVPALMSSIYQSMVQEHERSLGAWHAEWLSLPEIFQLTAGALERTLDVLKGMEVNAENMHQNIECTHGLIMAEAVMMALAPHMGRLNAHHVVEAACKTAVAEQKHLKDIISQVDEVKQYFNPSQLDEIFKPESYLGNIQDQIDAVLQEAKGEAK.

Belongs to the class-II fumarase/aspartase family. In terms of assembly, homotetramer.

It catalyses the reaction 2-(carboxymethyl)-5-oxo-2,5-dihydro-2-furoate = 3-carboxy-cis,cis-muconate + H(+). The protein operates within aromatic compound metabolism; beta-ketoadipate pathway; 5-oxo-4,5-dihydro-2-furylacetate from 3-carboxy-cis,cis-muconate: step 1/2. Functionally, catalyzes an anti cycloisomerization. This chain is 3-carboxy-cis,cis-muconate cycloisomerase (pcaB), found in Acinetobacter baylyi (strain ATCC 33305 / BD413 / ADP1).